The primary structure comprises 600 residues: Proline--tRNA ligase (600 aa).

It belongs to the class-II aminoacyl-tRNA synthetase family. ProS type 1 subfamily. In terms of assembly, homodimer.

The protein resides in the cytoplasm. It catalyses the reaction tRNA(Pro) + L-proline + ATP = L-prolyl-tRNA(Pro) + AMP + diphosphate. Functionally, catalyzes the attachment of proline to tRNA(Pro) in a two-step reaction: proline is first activated by ATP to form Pro-AMP and then transferred to the acceptor end of tRNA(Pro). As ProRS can inadvertently accommodate and process non-cognate amino acids such as alanine and cysteine, to avoid such errors it has two additional distinct editing activities against alanine. One activity is designated as 'pretransfer' editing and involves the tRNA(Pro)-independent hydrolysis of activated Ala-AMP. The other activity is designated 'posttransfer' editing and involves deacylation of mischarged Ala-tRNA(Pro). The misacylated Cys-tRNA(Pro) is not edited by ProRS. The polypeptide is Proline--tRNA ligase (Prochlorococcus marinus (strain MIT 9211)).